The sequence spans 375 residues: MKKQRMLVLFTALLFVFTGCSHSPETKESPKEKAQTQKVSSASASEKKDLPNIRILATGGTIAGADQSKTSTTEYKAGVVGVESLIEAVPEMKDIANVSGEQIVNVGSTNIDNKILLKLAKRINHLLASDDVDGIVVTHGTDTLEETAYFLNLTVKSDKPVVIVGSMRPSTAISADGPSNLYNAVKVAGAPEAKGKGTLVVLNDRIASARYVTKTNTTTTDTFKSEEMGFVGTIADDIYFNNEITRKHTKDTDFSVSNLDELPQVDIIYGYQNDGSYLFDAAVKAGAKGIVFAGSGNGSLSDAAEKGADSAVKKGVTVVRSTRTGNGVVTPNQDYAEKDLLASNSLNPQKARMLLMLALTKTNDPQKIQAYFNEY.

Positions 1–19 are cleaved as a signal peptide; that stretch reads MKKQRMLVLFTALLFVFTG. The tract at residues 22–46 is disordered; that stretch reads HSPETKESPKEKAQTQKVSSASASE. Residues 24–35 are compositionally biased toward basic and acidic residues; it reads PETKESPKEKAQ. Positions 51-375 constitute an Asparaginase/glutaminase domain; that stretch reads PNIRILATGG…QKIQAYFNEY (325 aa). The active-site O-isoaspartyl threonine intermediate is threonine 61. Substrate contacts are provided by residues serine 108 and 141–142; that span reads TD.

This sequence belongs to the asparaginase 1 family. As to quaternary structure, homotetramer.

It carries out the reaction L-asparagine + H2O = L-aspartate + NH4(+). Catalyzes the conversion of L-asparagine to L-aspartate and ammonium. This is L-asparaginase 2 (ansZ) from Bacillus subtilis (strain 168).